We begin with the raw amino-acid sequence, 412 residues long: Histone-lysine N-methyltransferase SUV39H1 (412 aa).

The interval 1 to 89 (MAENLKGCSV…LKCIRVLKQF (89 aa)) is interaction with SIRT1. Positions 43-101 (FEVEYLCDYKKIREQEYYLVKWRGYPDSENTWEPRQNLKCIRVLKQFHKDLERELVRRH) constitute a Chromo domain. Residues 179-240 (VGCECQDCLL…DCPNRVVQKG (62 aa)) form the Pre-SET domain. Zn(2+) contacts are provided by cysteine 181, cysteine 183, cysteine 186, cysteine 194, cysteine 195, cysteine 222, cysteine 226, cysteine 228, and cysteine 232. One can recognise an SET domain in the interval 243–366 (YDLCIFRTND…AGEELTFDYN (124 aa)). 254–256 (RGW) provides a ligand contact to S-adenosyl-L-methionine. Residues 255 to 377 (GWGVRTLEKI…QVDPVDMEST (123 aa)) are mediates interaction with MECOM. The residue at position 266 (lysine 266) is an N6-acetyllysine. Residues tyrosine 297 and 323 to 324 (NH) contribute to the S-adenosyl-L-methionine site. Residue cysteine 326 participates in Zn(2+) binding. Serine 391 is modified (phosphoserine). A Post-SET domain is found at 396–412 (VRIECKCGTTACRKYLF). Zn(2+) is bound by residues cysteine 400, cysteine 402, and cysteine 407.

This sequence belongs to the class V-like SAM-binding methyltransferase superfamily. Histone-lysine methyltransferase family. Suvar3-9 subfamily. As to quaternary structure, interacts with CCAR2 and GFI1B. Component of the eNoSC complex, composed of SIRT1, SUV39H1 and RRP8. Interacts with H3 and H4 histones. Interacts with DNMT3B, CBX1, CBX4, MBD1, RUNX1, RUNX3, MYOD1, SMAD5 and RB1. Interacts with SBF1 through the SET domain. Interacts with HDAC1 and HDAC2 through the N-terminus and associates with the core histone deacetylase complex composed of HDAC1, HDAC2, RBBP4 and RBBP7. Interacts (via SET domain) with MECOM; enhances MECOM transcriptional repression activity. Interacts with LMNA; the interaction increases stability of SUV39H1. The large PER complex involved in the histone methylation is composed of at least PER2, CBX3, TRIM28, SUV39H1 and/or SUV39H2; CBX3 mediates the formation of the complex. Phosphorylated on serine residues, and to a lesser degree, on threonine residues. Post-translationally, acetylated at Lys-266, leading to inhibition of enzyme activity. SIRT1-mediated deacetylation relieves this inhibition. In terms of processing, ubiquitinated by the DCX(DCAF13) E3 ubiquitin ligase complex, leading to its degradation. Widely expressed.

Its subcellular location is the nucleus. The protein localises to the nucleus lamina. The protein resides in the nucleoplasm. It localises to the chromosome. It is found in the centromere. The enzyme catalyses L-lysyl(9)-[histone H3] + 3 S-adenosyl-L-methionine = N(6),N(6),N(6)-trimethyl-L-lysyl(9)-[histone H3] + 3 S-adenosyl-L-homocysteine + 3 H(+). With respect to regulation, negatively regulated by CCAR2. Functionally, histone methyltransferase that specifically trimethylates 'Lys-9' of histone H3 using monomethylated H3 'Lys-9' as substrate. H3 'Lys-9' trimethylation represents a specific tag for epigenetic transcriptional repression by recruiting HP1 (CBX1, CBX3 and/or CBX5) proteins to methylated histones. Mainly functions in heterochromatin regions, thereby playing a central role in the establishment of constitutive heterochromatin at pericentric and telomere regions. H3 'Lys-9' trimethylation is also required to direct DNA methylation at pericentric repeats. SUV39H1 is targeted to histone H3 via its interaction with RB1 and is involved in many processes, such as repression of MYOD1-stimulated differentiation, regulation of the control switch for exiting the cell cycle and entering differentiation, repression by the PML-RARA fusion protein, BMP-induced repression, repression of switch recombination to IgA and regulation of telomere length. Component of the eNoSC (energy-dependent nucleolar silencing) complex, a complex that mediates silencing of rDNA in response to intracellular energy status and acts by recruiting histone-modifying enzymes. The eNoSC complex is able to sense the energy status of cell: upon glucose starvation, elevation of NAD(+)/NADP(+) ratio activates SIRT1, leading to histone H3 deacetylation followed by dimethylation of H3 at 'Lys-9' (H3K9me2) by SUV39H1 and the formation of silent chromatin in the rDNA locus. Recruited by the PER complex to the E-box elements of the circadian target genes such as PER2 itself or PER1, contributes to the conversion of local chromatin to a heterochromatin-like repressive state through H3 'Lys-9' trimethylation. The chain is Histone-lysine N-methyltransferase SUV39H1 (Suv39h1) from Mus musculus (Mouse).